We begin with the raw amino-acid sequence, 152 residues long: Troponin C (152 aa).

At threonine 1 the chain carries N-acetylthreonine. EF-hand domains lie at 9–44, 45–80, 82–117, and 118–152; these read KQIL…LGLL, VKDD…KLKE, LDER…LGDE, and LTEE…SSDA. Residues aspartate 131, aspartate 133, serine 135, threonine 137, and glutamate 142 each contribute to the Ca(2+) site.

This sequence belongs to the troponin C family.

In terms of biological role, troponin is the central regulatory protein of striated muscle contraction. Tn consists of three components: Tn-I which is the inhibitor of actomyosin ATPase, Tn-T which contains the binding site for tropomyosin and Tn-C. The binding of calcium to Tn-C abolishes the inhibitory action of Tn on actin filaments. In Mizuhopecten yessoensis (Japanese scallop), this protein is Troponin C.